The sequence spans 212 residues: Proheparin-binding EGF-like growth factor (212 aa).

The signal sequence occupies residues 1 to 18 (MDGRVVLIHALLTAVCSA). The Extracellular portion of the chain corresponds to 19–167 (AVGKFGRDGP…PSTYDHTTAL (149 aa)). Residues 82 to 108 (SKPQGPVTPKKKGNGNKRRKGKGLGKK) form a disordered region. Residues 90–106 (PKKKGNGNKRRKGKGLG) show a composition bias toward basic residues. Residues 108-148 (KRDPCLRKYKDFCIHGECKYIRELGAPSCICQPGYHGERCH) form the EGF-like domain. 3 cysteine pairs are disulfide-bonded: Cys-112–Cys-125, Cys-120–Cys-136, and Cys-138–Cys-147. Positions 153–212 (PVEHPPSTYDHTTALAVVAVVLSSLCLVIITALLMFRCHKRGVYDVENEEKIKLGITVNH) are cleaved as a propeptide — C-terminal. The helical transmembrane segment at 168–188 (AVVAVVLSSLCLVIITALLMF) threads the bilayer. Topologically, residues 189–212 (RCHKRGVYDVENEEKIKLGITVNH) are cytoplasmic.

Interacts with CNIH2.

The protein localises to the secreted. It localises to the extracellular space. Its subcellular location is the cell membrane. May be involved in macrophage-mediated cellular proliferation. It is mitogenic for fibroblasts and smooth muscle but not endothelial cells. It is able to bind EGF receptor/EGFR with higher affinity than EGF itself and is a far more potent mitogen for smooth muscle cells than EGF. Plays an important role in the proper development of cranial nerves by inhibiting the migration of the cranial neural crest cells (NCCs) into the odd-numbered neuromeres (r3 and r5) of the hindbrain Plays a role in mediating v-Jun-induced oncogenic transformation. The polypeptide is Proheparin-binding EGF-like growth factor (HBEGF) (Gallus gallus (Chicken)).